We begin with the raw amino-acid sequence, 77 residues long: Spermatid-specific protein T2 (77 aa).

The hydrophobic stretch occupies residues 1–21 (MKVAANTSKMLVEKLDLLKGG). The segment at 1 to 77 (MKVAANTSKM…YSRRRYRRRR (77 aa)) is disordered. Residues 20–77 (GGRRRRRRSRRRRRSRRRRSRSPYRRRYRRRRRRRRSRRRRRYRRRRSYSRRRYRRRR) show a composition bias toward basic residues.

Post-translationally, phosphorylation occurs at different degrees. The triphosphorylated form may be predominant in T2. SP2 appears to be phosphorylated in elongated spermatids, but dephosphorylated in mature sperm cells. As to expression, testis.

The protein localises to the nucleus. It is found in the chromosome. Functionally, cuttlefish spermiogenesis is characterized by a double nuclear protein transition: histones -&gt; spermatid-specific proteins (T1/T2) -&gt; protamines (SP1/SP2). The protamines compact sperm DNA into a highly condensed, stable and inactive complex. In Sepia officinalis (Common cuttlefish), this protein is Spermatid-specific protein T2.